Reading from the N-terminus, the 172-residue chain is Translation initiation factor IF-3 (172 aa).

The protein belongs to the IF-3 family. In terms of assembly, monomer.

It localises to the cytoplasm. In terms of biological role, IF-3 binds to the 30S ribosomal subunit and shifts the equilibrium between 70S ribosomes and their 50S and 30S subunits in favor of the free subunits, thus enhancing the availability of 30S subunits on which protein synthesis initiation begins. The sequence is that of Translation initiation factor IF-3 from Campylobacter fetus subsp. fetus (strain 82-40).